A 38-amino-acid polypeptide reads, in one-letter code: Mu/omega-theraphotoxin-Mb1b (38 aa).

3 cysteine pairs are disulfide-bonded: cysteine 7-cysteine 21, cysteine 14-cysteine 26, and cysteine 20-cysteine 33. Serine 38 carries the serine amide modification.

Belongs to the neurotoxin 10 (Hwtx-1) family. 28 (Jztx-11) subfamily. As to expression, expressed by the venom gland.

The protein resides in the secreted. Paralytic toxin on insects that inhibits voltage-gated sodium (Nav) and calcium (Cav) channels in P.americana (American cockroach) dorsal unpaired median (DUM) neurons, and also inhibits the B.germanica (German cockroach) Nav channel (BgNaV1). May act as a gating-modifier toxin on Nav and as a pore blocker on Cav. In vivo, reversibly paralyzes both L.cuprina (Australian sheep blowfly) and M.domestica (housefly), but does not affect larvae of H.armigera (cotton bollworms). The sequence is that of Mu/omega-theraphotoxin-Mb1b from Monocentropus balfouri (Socotra Island blue baboon tarantula).